Reading from the N-terminus, the 104-residue chain is MDSYKVIELANKYSAAAEEVRSSKMLLESRLSALGDAWQGKARDSFDQDFEETKAAYDQFEQELLETSQELKAAAVKIEERKAEIARMEELERKAREERHKLGR.

Residues 42–104 adopt a coiled-coil conformation; sequence ARDSFDQDFE…AREERHKLGR (63 aa).

Belongs to the WXG100 family.

This is an uncharacterized protein from Bacillus subtilis (strain 168).